The primary structure comprises 461 residues: tRNA-splicing endonuclease subunit Sen2 (461 aa).

Disordered regions lie at residues 140-176 and 190-210; these read GAEQ…TSSP and GDPA…DVKE. Over residues 144–176 the composition is skewed to polar residues; that stretch reads TGDSCDTVCPNTENTELSGQSSTDTGNIATSSP. The segment covering 201 to 210 has biased composition (basic and acidic residues); that stretch reads KEQEPADVKE. Residues Y365, H373, and K412 contribute to the active site.

Belongs to the tRNA-intron endonuclease family. As to quaternary structure, tRNA splicing endonuclease is a heterotetramer composed of SEN2, SEN15, SEN34/LENG5 and SEN54.

It is found in the nucleus. It carries out the reaction pretRNA = a 3'-half-tRNA molecule with a 5'-OH end + a 5'-half-tRNA molecule with a 2',3'-cyclic phosphate end + an intron with a 2',3'-cyclic phosphate and a 5'-hydroxyl terminus.. Constitutes one of the two catalytic subunit of the tRNA-splicing endonuclease complex, a complex responsible for identification and cleavage of the splice sites in pre-tRNA. It cleaves pre-tRNA at the 5'- and 3'-splice sites to release the intron. The products are an intron and two tRNA half-molecules bearing 2',3'-cyclic phosphate and 5'-OH termini. There are no conserved sequences at the splice sites, but the intron is invariably located at the same site in the gene, placing the splice sites an invariant distance from the constant structural features of the tRNA body. Probably carries the active site for 5'-splice site cleavage. The tRNA splicing endonuclease is also involved in mRNA processing via its association with pre-mRNA 3'-end processing factors, establishing a link between pre-tRNA splicing and pre-mRNA 3'-end formation, suggesting that the endonuclease subunits function in multiple RNA-processing events. The sequence is that of tRNA-splicing endonuclease subunit Sen2 (TSEN2) from Gallus gallus (Chicken).